A 233-amino-acid chain; its full sequence is Small ribosomal subunit protein uS3 (233 aa).

In terms of domain architecture, KH type-2 spans 39–107 (VRQFLMKKLV…PAQINISEVR (69 aa)).

This sequence belongs to the universal ribosomal protein uS3 family. As to quaternary structure, part of the 30S ribosomal subunit. Forms a tight complex with proteins S10 and S14.

Functionally, binds the lower part of the 30S subunit head. Binds mRNA in the 70S ribosome, positioning it for translation. The polypeptide is Small ribosomal subunit protein uS3 (Buchnera aphidicola subsp. Schizaphis graminum (strain Sg)).